The following is a 368-amino-acid chain: N-acetylneuraminate epimerase (368 aa).

The N-terminal stretch at 1 to 19 (MNKTITALAIMMASFAANA) is a signal peptide. Kelch repeat units lie at residues 40-84 (TVYI…AFID), 86-137 (NLYV…FVHN), 139-173 (KAYV…KINA), 174-219 (YYFD…VNKG), 222-265 (TWLI…VAGG), 287-336 (ENYQ…PWNN), and 338-367 (LLII…VTVQ). Catalysis depends on Glu-228, which acts as the Proton acceptor.

This sequence belongs to the NanM family. As to quaternary structure, homodimer.

Its subcellular location is the periplasm. The enzyme catalyses N-acetyl-alpha-neuraminate = N-acetyl-beta-neuraminate. In terms of biological role, converts alpha-N-acetylneuranimic acid (Neu5Ac) to the beta-anomer, accelerating the equilibrium between the alpha- and beta-anomers. Probably facilitates sialidase-negative bacteria to compete successfully for limited amounts of extracellular Neu5Ac, which is likely taken up in the beta-anomer. In addition, the rapid removal of sialic acid from solution might be advantageous to the bacterium to damp down host responses. This is N-acetylneuraminate epimerase from Shigella boydii serotype 4 (strain Sb227).